Reading from the N-terminus, the 302-residue chain is Segregation and condensation protein A (302 aa).

The protein belongs to the ScpA family. Component of a cohesin-like complex composed of ScpA, ScpB and the Smc homodimer, in which ScpA and ScpB bind to the head domain of Smc. The presence of the three proteins is required for the association of the complex with DNA.

The protein resides in the cytoplasm. Its function is as follows. Participates in chromosomal partition during cell division. May act via the formation of a condensin-like complex containing Smc and ScpB that pull DNA away from mid-cell into both cell halves. This Xylella fastidiosa (strain 9a5c) protein is Segregation and condensation protein A.